The sequence spans 720 residues: Ciliated left-right organizer metallopeptidase (720 aa).

The signal sequence occupies residues methionine 1–serine 25. Topologically, residues alanine 26 to serine 668 are extracellular. A Zn(2+)-binding site is contributed by histidine 243. Residue glutamate 244 is part of the active site. The Zn(2+) site is built by histidine 247 and histidine 322. A helical membrane pass occupies residues tyrosine 669–tryptophan 689. Residues tyrosine 690 to valine 720 are Cytoplasmic-facing.

The protein belongs to the peptidase M8 family. Zn(2+) serves as cofactor.

It localises to the membrane. Its function is as follows. Putative metalloprotease playing a role in the process of LR patterning. The protein is Ciliated left-right organizer metallopeptidase (cirop) of Xenopus laevis (African clawed frog).